The sequence spans 208 residues: Thiamine-phosphate synthase (208 aa).

4-amino-2-methyl-5-(diphosphooxymethyl)pyrimidine-binding positions include 36-40 (QLRMK) and D68. Residues D69 and D88 each contribute to the Mg(2+) site. A 4-amino-2-methyl-5-(diphosphooxymethyl)pyrimidine-binding site is contributed by T107. Position 133 to 135 (133 to 135 (TTT)) interacts with 2-[(2R,5Z)-2-carboxy-4-methylthiazol-5(2H)-ylidene]ethyl phosphate. K136 provides a ligand contact to 4-amino-2-methyl-5-(diphosphooxymethyl)pyrimidine. G169 is a binding site for 2-[(2R,5Z)-2-carboxy-4-methylthiazol-5(2H)-ylidene]ethyl phosphate.

The protein belongs to the thiamine-phosphate synthase family. Requires Mg(2+) as cofactor.

The catalysed reaction is 2-[(2R,5Z)-2-carboxy-4-methylthiazol-5(2H)-ylidene]ethyl phosphate + 4-amino-2-methyl-5-(diphosphooxymethyl)pyrimidine + 2 H(+) = thiamine phosphate + CO2 + diphosphate. It catalyses the reaction 2-(2-carboxy-4-methylthiazol-5-yl)ethyl phosphate + 4-amino-2-methyl-5-(diphosphooxymethyl)pyrimidine + 2 H(+) = thiamine phosphate + CO2 + diphosphate. It carries out the reaction 4-methyl-5-(2-phosphooxyethyl)-thiazole + 4-amino-2-methyl-5-(diphosphooxymethyl)pyrimidine + H(+) = thiamine phosphate + diphosphate. Its pathway is cofactor biosynthesis; thiamine diphosphate biosynthesis; thiamine phosphate from 4-amino-2-methyl-5-diphosphomethylpyrimidine and 4-methyl-5-(2-phosphoethyl)-thiazole: step 1/1. In terms of biological role, condenses 4-methyl-5-(beta-hydroxyethyl)thiazole monophosphate (THZ-P) and 2-methyl-4-amino-5-hydroxymethyl pyrimidine pyrophosphate (HMP-PP) to form thiamine monophosphate (TMP). The protein is Thiamine-phosphate synthase of Phocaeicola vulgatus (strain ATCC 8482 / DSM 1447 / JCM 5826 / CCUG 4940 / NBRC 14291 / NCTC 11154) (Bacteroides vulgatus).